A 270-amino-acid polypeptide reads, in one-letter code: A-type potassium channel modulatory protein KCNIP2 (270 aa).

The segment covering 1-17 (MRGQGRKESLSDSRDLD) has biased composition (basic and acidic residues). The interval 1–32 (MRGQGRKESLSDSRDLDGSYDQLTGHPPGPTK) is disordered. At serine 9 the chain carries Phosphoserine. S-palmitoyl cysteine attachment occurs at residues cysteine 45 and cysteine 46. The region spanning 81–137 (FELSTVCHRPEGLEQLQEQTKFTRKELQVLYRGFKNECPSGIVNEENFKQIYSQFFP) is the EF-hand 1; degenerate domain. 3 EF-hand domains span residues 140 to 175 (DSST…ILRG), 176 to 211 (TVDD…IYDM), and 224 to 259 (APRE…DENI). Ca(2+)-binding residues include aspartate 153, asparagine 155, aspartate 157, serine 159, aspartate 164, aspartate 189, asparagine 191, aspartate 193, cysteine 195, glutamate 200, aspartate 237, asparagine 239, aspartate 241, and glutamate 248. Residues 257–270 (ENIMRSMQLFDNVI) are interaction with KCND2.

Belongs to the recoverin family. As to quaternary structure, component of heteromultimeric potassium channels. Identified in potassium channel complexes containing KCND1, KCND2, KCND3, KCNIP1, KCNIP2, KCNIP3, KCNIP4, DPP6 and DPP10. The KCND2-KCNIP2 channel complex contains four KCND2 and four KCNIP2 subunits. Interacts with KCND2. Probably part of a complex consisting of KCNIP1, KCNIP2 isoform 3 and KCND2. At least isoform 2 and isoform 3 can self-associate to form homodimers and homotetramers. Isoform 3 interacts with KCNIP1 in a calcium-dependent manner. Interacts with KCND3; each KCNIP2 monomer interacts with two adjacent KCND3 subunits, through both the N-terminal inactivation ball of a KCND3 subunit and a C-terminal helix from the adjacent KCND3 subunit, clamping them together; this interaction modulates the channel gating kinetics. Palmitoylated. Palmitoylation enhances association with the plasma membrane. As to expression, expressed in brain. Colocalizes with KCND2 in excitatory neurons including cortical and hippocampal CA1 pyramidal cells. Isoform 3 is expressed in heart and in umbilical vein endothelial cells. Not expressed in fetal heart.

It is found in the cell membrane. In terms of biological role, regulatory subunit of Kv4/D (Shal)-type voltage-gated rapidly inactivating A-type potassium channels. Modulates channel density, inactivation kinetics and rate of recovery from inactivation in a calcium-dependent and isoform-specific manner. Involved in KCND2 and KCND3 trafficking to the cell surface. May be required for the expression of I(To) currents in the heart. This Homo sapiens (Human) protein is A-type potassium channel modulatory protein KCNIP2.